We begin with the raw amino-acid sequence, 179 residues long: Large ribosomal subunit protein uL5 (179 aa).

The protein belongs to the universal ribosomal protein uL5 family. In terms of assembly, part of the 50S ribosomal subunit; part of the 5S rRNA/L5/L18/L25 subcomplex. Contacts the 5S rRNA and the P site tRNA. Forms a bridge to the 30S subunit in the 70S ribosome.

This is one of the proteins that bind and probably mediate the attachment of the 5S RNA into the large ribosomal subunit, where it forms part of the central protuberance. In the 70S ribosome it contacts protein S13 of the 30S subunit (bridge B1b), connecting the 2 subunits; this bridge is implicated in subunit movement. Contacts the P site tRNA; the 5S rRNA and some of its associated proteins might help stabilize positioning of ribosome-bound tRNAs. This Pseudoalteromonas translucida (strain TAC 125) protein is Large ribosomal subunit protein uL5.